Here is a 500-residue protein sequence, read N- to C-terminus: MSKVPRSSSEAEDIWETEDDMTEGDLGYGLGRKPGGIYEVPCSITSKKRSDGKNSSPPPFPRKGEERSETSFQYSRRKGFQDTSAEGYRASRLSSTDSNSELSDEQLRRRLHEALEDVEILKTELEASQRQLEGKEEALKILQSMAMLGKATSHTQTMLQKTIEQKRSLEKEINALQWEMEFDQDRFKNIEESWIQKCDRLNCDNAVLRENLKLRTEEIKMLKSKNAVLNQRYLEALAMLDIKEQKMGQEESGFTDVSGLELAVLGACLCHGPGGSPCSCAKMAASTRKLVLQLRHELETLQKSKEEAHITADAFRIAFEQQLMRKNEQALRLAGGDLCKRAATWINRQHQADDGYPAQRRKKTLGQRLLGILPSENSSKGAEDQDNMQEVFKMLVDLLNDKEEALAHQRKVSYMLARALEDKDTASERNKEKIPMSQTFPFKTAWHDASELCGLRDPVQSNHVSEPMACICSIQHPPKVSDCPRTLKRSCSLPSTLFYK.

The segment at 1-105 (MSKVPRSSSE…TDSNSELSDE (105 aa)) is disordered. The segment covering 10 to 23 (EAEDIWETEDDMTE) has biased composition (acidic residues). The span at 92 to 101 (RLSSTDSNSE) shows a compositional bias: polar residues. 2 coiled-coil regions span residues 101 to 237 (ELSD…LEAL) and 286 to 314 (STRK…TADA). The residue at position 492 (Ser-492) is a Phosphoserine.

Expressed in many tissues, with highest levels in spleen, thymus and bone marrow.

It localises to the cytoplasm. Its function is as follows. May be involved in the regulation of cell migration. The sequence is that of Coiled-coil domain-containing protein 125 (Ccdc125) from Mus musculus (Mouse).